The following is a 395-amino-acid chain: Succinyl-diaminopimelate desuccinylase (395 aa).

Zn(2+) is bound at residue histidine 74. Aspartate 76 is a catalytic residue. Residue aspartate 107 coordinates Zn(2+). Glutamate 141 serves as the catalytic Proton acceptor. Glutamate 142, glutamate 170, and histidine 368 together coordinate Zn(2+).

The protein belongs to the peptidase M20A family. DapE subfamily. Homodimer. Requires Zn(2+) as cofactor. It depends on Co(2+) as a cofactor.

It carries out the reaction N-succinyl-(2S,6S)-2,6-diaminopimelate + H2O = (2S,6S)-2,6-diaminopimelate + succinate. The protein operates within amino-acid biosynthesis; L-lysine biosynthesis via DAP pathway; LL-2,6-diaminopimelate from (S)-tetrahydrodipicolinate (succinylase route): step 3/3. Catalyzes the hydrolysis of N-succinyl-L,L-diaminopimelic acid (SDAP), forming succinate and LL-2,6-diaminopimelate (DAP), an intermediate involved in the bacterial biosynthesis of lysine and meso-diaminopimelic acid, an essential component of bacterial cell walls. This chain is Succinyl-diaminopimelate desuccinylase, found in Brucella canis (strain ATCC 23365 / NCTC 10854 / RM-666).